The chain runs to 508 residues: Maturase K (508 aa).

Belongs to the intron maturase 2 family. MatK subfamily.

It localises to the plastid. The protein resides in the chloroplast. Functionally, usually encoded in the trnK tRNA gene intron. Probably assists in splicing its own and other chloroplast group II introns. The sequence is that of Maturase K from Marathrum schiedeanum.